Consider the following 154-residue polypeptide: Transcriptional repressor NrdR (154 aa).

A zinc finger lies at 3–34; sequence CPFCGAHDTKVIDSRLVAEGDQVRRRRECLAC. Positions 49–139 constitute an ATP-cone domain; the sequence is PRLIKQDGSR…VYRRFQDLNE (91 aa).

It belongs to the NrdR family. The cofactor is Zn(2+).

In terms of biological role, negatively regulates transcription of bacterial ribonucleotide reductase nrd genes and operons by binding to NrdR-boxes. This is Transcriptional repressor NrdR from Pseudomonas aeruginosa (strain LESB58).